A 183-amino-acid chain; its full sequence is Cell division protein SepF (183 aa).

The segment at 13 to 58 is disordered; the sequence is MHDDDDFDDDYEDYDDDFDEDYEDDKPSARKRLFTGSSKKDSVADE. Over residues 16–36 the composition is skewed to acidic residues; that stretch reads DDDFDDDYEDYDDDFDEDYED.

It belongs to the SepF family. As to quaternary structure, homodimer. Interacts with FtsZ.

The protein localises to the cytoplasm. In terms of biological role, cell division protein that is part of the divisome complex and is recruited early to the Z-ring. Probably stimulates Z-ring formation, perhaps through the cross-linking of FtsZ protofilaments. Its function overlaps with FtsA. This chain is Cell division protein SepF, found in Lachnospira eligens (strain ATCC 27750 / DSM 3376 / VPI C15-48 / C15-B4) (Eubacterium eligens).